Here is a 522-residue protein sequence, read N- to C-terminus: Sensory neuron membrane protein 1 (522 aa).

The Cytoplasmic segment spans residues 1-11 (MQLAKPLKYAA). A helical transmembrane segment spans residues 12 to 32 (ISGIVAFVGLMFGWVIFPAIL). Topologically, residues 33 to 458 (KSQLKKEMAL…SQLFIPKRVV (426 aa)) are extracellular. Asn-67, Asn-105, and Asn-229 each carry an N-linked (GlcNAc...) asparagine glycan. 3 cysteine pairs are disulfide-bonded: Cys-268-Cys-333, Cys-297-Cys-352, and Cys-335-Cys-341. N-linked (GlcNAc...) asparagine glycosylation occurs at Asn-440. A helical membrane pass occupies residues 459 to 479 (SVVCWCMISFGSLGVIAAVIF). Residues 480 to 522 (HFKGDIMHLAVAGDNSVSKIKPENDENKEVGVMGQNQEPAKVM) are Cytoplasmic-facing. A disordered region spans residues 500-522 (KPENDENKEVGVMGQNQEPAKVM). Residues 513–522 (GQNQEPAKVM) are compositionally biased toward polar residues.

The protein belongs to the CD36 family. Principal component of the olfactory cilia membrane. Detected in both male and female antennae but not present in leg, abdomen, thorax or head.

Its subcellular location is the cell membrane. Its function is as follows. Plays an olfactory role that is not restricted to pheromone sensitivity. This is Sensory neuron membrane protein 1 from Bombyx mori (Silk moth).